A 236-amino-acid polypeptide reads, in one-letter code: MSKVCAVFGGSRGIGKAVAKLLAQKDYKVAVISRNLEVAQAAVTEIGAHLALSCDVSKENEIQCTFKEIKNNLGNIDYLVNSAGISRDALLLRTRSEDIMSLLSINLVGTIQTCKVALKGMIQQQGGSIVNIGSIVGHKGNIGQSIYGASKEGLIGFSKSLAKEVAKRNIRVNVVAPGFIRTDMTSDLKEDSLNKMIPLGRFGEPEEVAQSVLFLLESPYITGHVLVVDGGLQLHL.

Residues 11–14, 34–35, Asp55, and 82–84 contribute to the NADP(+) site; these read SRGI, RN, and SAG. Ser134 contributes to the substrate binding site. Residues Tyr147, Lys151, and 180–182 contribute to the NADP(+) site; that span reads IRT. The active-site Proton acceptor is the Tyr147.

The protein belongs to the short-chain dehydrogenases/reductases (SDR) family. In terms of assembly, homotetramer (in vitro). Heterotetramer with HSD17B8; contains two molecules each of HSD17B8 and CBR4.

The protein resides in the mitochondrion matrix. The protein operates within lipid metabolism; fatty acid biosynthesis. In terms of biological role, the heterotetramer with HSD17B8 has NADH-dependent 3-ketoacyl-acyl carrier protein reductase activity, and thereby plays a role in mitochondrial fatty acid biosynthesis. Within the heterotetramer, HSD17B8 binds NADH; CBR4 binds NADPD. The homotetramer has NADPH-dependent quinone reductase activity. Both homotetramer and the heterotetramer have broad in vitro substrate specificity and can reduce 9,10-phenanthrenequinone, 1,4-benzoquinone and various other o-quinones and p-quinones. The chain is Carbonyl reductase family member 4 (cbr4) from Xenopus laevis (African clawed frog).